Consider the following 238-residue polypeptide: 3-dehydroquinate dehydratase (238 aa).

3-dehydroquinate-binding positions include 35-37 (ELR) and Arg70. His133 (proton donor/acceptor) is an active-site residue. Lys160 functions as the Schiff-base intermediate with substrate in the catalytic mechanism. Arg202 and Gln225 together coordinate 3-dehydroquinate.

It belongs to the type-I 3-dehydroquinase family. In terms of assembly, homodimer.

It catalyses the reaction 3-dehydroquinate = 3-dehydroshikimate + H2O. The protein operates within metabolic intermediate biosynthesis; chorismate biosynthesis; chorismate from D-erythrose 4-phosphate and phosphoenolpyruvate: step 3/7. In terms of biological role, involved in the third step of the chorismate pathway, which leads to the biosynthesis of aromatic amino acids. Catalyzes the cis-dehydration of 3-dehydroquinate (DHQ) and introduces the first double bond of the aromatic ring to yield 3-dehydroshikimate. This Staphylococcus aureus (strain Mu3 / ATCC 700698) protein is 3-dehydroquinate dehydratase.